A 335-amino-acid chain; its full sequence is Adenine deaminase (335 aa).

The Zn(2+) site is built by histidine 17, histidine 19, and histidine 197. Catalysis depends on glutamate 200, which acts as the Proton donor. Aspartate 278 is a binding site for Zn(2+). Residue aspartate 279 coordinates substrate.

Belongs to the metallo-dependent hydrolases superfamily. Adenosine and AMP deaminases family. Adenine deaminase type 2 subfamily. It depends on Zn(2+) as a cofactor.

It carries out the reaction adenine + H2O + H(+) = hypoxanthine + NH4(+). Its function is as follows. Catalyzes the hydrolytic deamination of adenine to hypoxanthine. Plays an important role in the purine salvage pathway and in nitrogen catabolism. This is Adenine deaminase from Marinomonas sp. (strain MWYL1).